Consider the following 557-residue polypeptide: Copine-6 (557 aa).

2 consecutive C2 domains span residues 1–127 (MSDP…TKPL) and 134–263 (NAGK…MQWD). Ca(2+) contacts are provided by Asp167, Asp173, Asp229, Asp231, and Asp237. The interval 244–303 (STFQEMQEGTANPGQEMQWDCINPKYRDKKKHYKSSGTVVLAQCTVEKVHTFLDYIMGGC) is linker region. In terms of domain architecture, VWFA spans 306–526 (SFTVAIDFTA…ALAKCVLAEV (221 aa)).

The protein belongs to the copine family. Interacts (via second C2 domain) with OS9 (via C-terminus); this interaction occurs in a calcium-dependent manner in vitro. May interact with NECAB1. Requires Ca(2+) as cofactor.

It is found in the cytoplasm. Its subcellular location is the cell membrane. The protein localises to the endosome. It localises to the cytoplasmic vesicle. The protein resides in the clathrin-coated vesicle. It is found in the perikaryon. Its subcellular location is the cell projection. The protein localises to the dendrite. Functionally, calcium-dependent phospholipid-binding protein that plays a role in calcium-mediated intracellular processes. Binds phospholipid membranes in a calcium-dependent manner. Plays a role in dendrite formation by melanocytes. This Bos taurus (Bovine) protein is Copine-6.